The following is a 1173-amino-acid chain: BRCA2-interacting transcriptional repressor EMSY (1173 aa).

Positions 16–100 constitute an ENT domain; that stretch reads CKRILRKLEL…EWSIEGRRLV (85 aa). Over residues 149–177 the composition is skewed to low complexity; the sequence is STTSTPPSASAPSSSSAAVKSPRPASPAS. 7 disordered regions span residues 149-179, 191-216, 676-720, 797-816, 905-998, 1020-1046, and 1139-1173; these read STTSTPPSASAPSSSSAAVKSPRPASPASNV, KSVSCSDEDEKPRKRRRTSSSSSSPV, NRSA…DAPP, SAEQRESPEPSGQSAAESDA, RVCE…GAQV, PRAPVSSSSSSEAALKLQAESSSEKPS, and DYTSQRLDEEQAMEQEVDSSNDEGAAASPSADQSQ. The segment covering 683–693 has biased composition (low complexity); the sequence is TTSTHTSAAAA. 2 stretches are compositionally biased toward low complexity: residues 911–921 and 937–953; these read SSSSSSSSSSS and SSSSAPATAASANTPHT. 2 stretches are compositionally biased toward polar residues: residues 961-976 and 989-998; these read QAPTTHNRPNTHTQLS and SSKTSSGAQV. Positions 1025–1040 are enriched in low complexity; it reads SSSSSSEAALKLQAES. A compositionally biased stretch (acidic residues) spans 1148–1159; sequence EQAMEQEVDSSN.

As to quaternary structure, homodimer.

The protein localises to the nucleus. In terms of biological role, regulator which is able to repress transcription, possibly via its interaction with a multiprotein chromatin remodeling complex that modifies the chromatin. This chain is BRCA2-interacting transcriptional repressor EMSY, found in Danio rerio (Zebrafish).